The primary structure comprises 570 residues: Sulfite reductase [NADPH] hemoprotein beta-component (570 aa).

[4Fe-4S] cluster is bound by residues Cys-434, Cys-440, Cys-479, and Cys-483. Cys-483 is a binding site for siroheme.

The protein belongs to the nitrite and sulfite reductase 4Fe-4S domain family. Alpha(8)-beta(8). The alpha component is a flavoprotein, the beta component is a hemoprotein. The cofactor is siroheme. [4Fe-4S] cluster is required as a cofactor.

The catalysed reaction is hydrogen sulfide + 3 NADP(+) + 3 H2O = sulfite + 3 NADPH + 4 H(+). It participates in sulfur metabolism; hydrogen sulfide biosynthesis; hydrogen sulfide from sulfite (NADPH route): step 1/1. Functionally, component of the sulfite reductase complex that catalyzes the 6-electron reduction of sulfite to sulfide. This is one of several activities required for the biosynthesis of L-cysteine from sulfate. The polypeptide is Sulfite reductase [NADPH] hemoprotein beta-component (Escherichia coli O6:H1 (strain CFT073 / ATCC 700928 / UPEC)).